A 102-amino-acid polypeptide reads, in one-letter code: MYAIIKNGGKQYKVKEGDIICFDKMGLEPKTKVEFKEVLAVDNGELKVGTPFVEGAVVEGEVINEGRGKKVIIFKKRRRKDSKVKRGFRRDFTRVKITAINA.

This sequence belongs to the bacterial ribosomal protein bL21 family. As to quaternary structure, part of the 50S ribosomal subunit. Contacts protein L20.

Its function is as follows. This protein binds to 23S rRNA in the presence of protein L20. The chain is Large ribosomal subunit protein bL21 from Nitratiruptor sp. (strain SB155-2).